A 363-amino-acid polypeptide reads, in one-letter code: MNKLALYCRPGFEKEVAAEIADQASHLGVFGFARVQDNSGYVIFECYQPDEADRLARDIPFNRLIFARQMMVISGLLEDLDPADRISPIVTAFEELSQQVNFAQSSELFVETADTNEAKELSTFCRKFTVPLRQALKKQGWLSAKATQKSGQFLHCFFVKPNCCYVGYSYVDNHSPHFMGIPRLKFPADAPSRSTLKLEEAILTFIPRKEENKRLNENMIGVDLGACPGGWTYQLVKRGLFVYAVDHGKMAASLHDTGRIEHCAEDGFKFQPPKRKKVDWLVCDMVEQPSRISLLIGKWLLNGWCRETIFNLKLPMKKRYQEVILCLENLAVMLAEQNLNFEIQAKHLYHDREEITVHIALKP.

Residues S194, 227–230, D246, D266, and D284 each bind S-adenosyl-L-methionine; that span reads CPGG. K313 serves as the catalytic Proton acceptor.

This sequence belongs to the class I-like SAM-binding methyltransferase superfamily. RNA methyltransferase RlmE family. RlmM subfamily. Monomer.

It localises to the cytoplasm. The catalysed reaction is cytidine(2498) in 23S rRNA + S-adenosyl-L-methionine = 2'-O-methylcytidine(2498) in 23S rRNA + S-adenosyl-L-homocysteine + H(+). Catalyzes the 2'-O-methylation at nucleotide C2498 in 23S rRNA. This chain is Ribosomal RNA large subunit methyltransferase M, found in Haemophilus influenzae (strain PittEE).